A 154-amino-acid polypeptide reads, in one-letter code: Toxin YhaV (154 aa).

Homohexamer; forms a complex with PrlF (SohA) with stoichiometry PrlF(2)-YhaV(4), possibly as a YhaV(2)-PrlF(2)-YhaV(2) complex like the MazFE complex. May dimerize in solution.

Toxic component of a type II toxin-antitoxin (TA) system. Has RNase activity in vitro. Acts as a transcription factor. The YhaV/PrlF complex binds the prlF-yhaV operon, probably negatively regulating its expression. In Escherichia coli O6:H1 (strain CFT073 / ATCC 700928 / UPEC), this protein is Toxin YhaV (yhaV).